The primary structure comprises 255 residues: Acid phosphatase 1 (255 aa).

A signal peptide spans 1–15 (MRIFVFLVLLTVAIG). N-linked (GlcNAc...) asparagine glycosylation is present at Asn-142.

This sequence belongs to the APS1/VSP family.

It carries out the reaction a phosphate monoester + H2O = an alcohol + phosphate. The protein is Acid phosphatase 1 (APS1) of Solanum lycopersicum (Tomato).